We begin with the raw amino-acid sequence, 220 residues long: Deoxyribose-phosphate aldolase (220 aa).

Asp89 serves as the catalytic Proton donor/acceptor. Lys151 functions as the Schiff-base intermediate with acetaldehyde in the catalytic mechanism. Lys180 serves as the catalytic Proton donor/acceptor.

It belongs to the DeoC/FbaB aldolase family. DeoC type 1 subfamily.

It is found in the cytoplasm. The catalysed reaction is 2-deoxy-D-ribose 5-phosphate = D-glyceraldehyde 3-phosphate + acetaldehyde. It participates in carbohydrate degradation; 2-deoxy-D-ribose 1-phosphate degradation; D-glyceraldehyde 3-phosphate and acetaldehyde from 2-deoxy-alpha-D-ribose 1-phosphate: step 2/2. Catalyzes a reversible aldol reaction between acetaldehyde and D-glyceraldehyde 3-phosphate to generate 2-deoxy-D-ribose 5-phosphate. The sequence is that of Deoxyribose-phosphate aldolase from Streptococcus pneumoniae (strain Taiwan19F-14).